The following is a 208-amino-acid chain: Small ribosomal subunit protein uS4 (208 aa).

Positions 95–157 (RRIDNIVYRA…DSLKKLVRSN (63 aa)) constitute an S4 RNA-binding domain.

Belongs to the universal ribosomal protein uS4 family. As to quaternary structure, part of the 30S ribosomal subunit. Contacts protein S5. The interaction surface between S4 and S5 is involved in control of translational fidelity.

One of the primary rRNA binding proteins, it binds directly to 16S rRNA where it nucleates assembly of the body of the 30S subunit. Its function is as follows. With S5 and S12 plays an important role in translational accuracy. The polypeptide is Small ribosomal subunit protein uS4 (Borrelia duttonii (strain Ly)).